The chain runs to 392 residues: Protein O-glucosyltransferase 1 (392 aa).

The signal sequence occupies residues 1–23 (MELGVSSQLWLWLLLLLLPPVPG). Disulfide bonds link cysteine 49–cysteine 56, cysteine 54–cysteine 357, cysteine 102–cysteine 108, and cysteine 263–cysteine 286. N-linked (GlcNAc...) asparagine glycosylation occurs at asparagine 53. The tract at residues 103–107 (MFPSR) is interaction with the consensus sequence C-X-S-X-[PA]-C in peptide substrates. The Proton donor/acceptor role is filled by aspartate 133. An interaction with the consensus sequence C-X-S-X-[PA]-C in peptide substrates region spans residues 172-178 (AVWPIYP). Tyrosine 177 serves as a coordination point for UDP-alpha-D-glucose. Asparagine 204 carries an N-linked (GlcNAc...) asparagine glycan. Residues serine 212, arginine 218, and 274–279 (VAASFR) each bind UDP-alpha-D-glucose. N-linked (GlcNAc...) asparagine glycosylation occurs at asparagine 373. Positions 389–392 (KIEL) match the Prevents secretion from ER motif.

The protein belongs to the glycosyltransferase 90 family.

The protein localises to the endoplasmic reticulum lumen. It carries out the reaction L-seryl-[EGF-like domain protein] + UDP-alpha-D-xylose = 3-O-(beta-D-xylosyl)-L-seryl-[EGF-like domain protein] + UDP + H(+). The enzyme catalyses L-seryl-[EGF-like domain protein] + UDP-alpha-D-glucose = 3-O-(beta-D-glucosyl)-L-seryl-[EGF-like domain protein] + UDP + H(+). Its pathway is protein modification; protein glycosylation. In terms of biological role, dual specificity glycosyltransferase that catalyzes the transfer of glucose and xylose from UDP-glucose and UDP-xylose, respectively, to a serine residue found in the consensus sequence of C-X-S-X-P-C. Specifically targets extracellular EGF repeats of protein such as CRB2, F7, F9 and NOTCH2. Acts as a positive regulator of Notch signaling by mediating O-glucosylation of Notch, leading to regulate muscle development. Notch glucosylation does not affect Notch ligand binding. Required during early development to promote gastrulation: acts by mediating O-glucosylation of CRB2, which is required for CRB2 localization to the cell membrane. This is Protein O-glucosyltransferase 1 (POGLUT1) from Bos taurus (Bovine).